The chain runs to 157 residues: Vesicle transport protein SFT2B (157 aa).

Met-1 carries the post-translational modification N-acetylmethionine. The Cytoplasmic portion of the chain corresponds to 1–36 (MDKLKKVLSGQDTEDRSGLSEVVESSSLSWSTRIKG). Residue Ser-9 is modified to Phosphoserine. Residues 37-57 (FIVCFALGILCSLLGTLLLWV) traverse the membrane as a helical segment. Residues 58 to 61 (SRKG) are Lumenal-facing. A helical transmembrane segment spans residues 62 to 82 (LFAVFYTLGNITSIGSTMFLM). Topologically, residues 83–96 (GPLKQLKRMFEPTR) are cytoplasmic. Residues 97–117 (LIATILVLLFFVLTLCSAFLW) form a helical membrane-spanning segment. Over 118–120 (NKG) the chain is Lumenal. The helical transmembrane segment at 121 to 141 (LALIFCILQSLALTWYSLSYI) threads the bilayer. Residues 142-157 (PYARDAVKKCFAVCLT) lie on the Cytoplasmic side of the membrane.

This sequence belongs to the SFT2 family.

The protein localises to the membrane. In terms of biological role, may be involved in fusion of retrograde transport vesicles derived from an endocytic compartment with the Golgi complex. The chain is Vesicle transport protein SFT2B from Rattus norvegicus (Rat).